We begin with the raw amino-acid sequence, 449 residues long: Phosphoglucosamine mutase (449 aa).

The Phosphoserine intermediate role is filled by Ser101. Mg(2+)-binding residues include Ser101, Asp240, Asp242, and Asp244. Ser101 is subject to Phosphoserine.

It belongs to the phosphohexose mutase family. Mg(2+) is required as a cofactor. Post-translationally, activated by phosphorylation.

The catalysed reaction is alpha-D-glucosamine 1-phosphate = D-glucosamine 6-phosphate. Functionally, catalyzes the conversion of glucosamine-6-phosphate to glucosamine-1-phosphate. The chain is Phosphoglucosamine mutase from Streptococcus mutans serotype c (strain ATCC 700610 / UA159).